We begin with the raw amino-acid sequence, 267 residues long: FCS-Like Zinc finger 8 (267 aa).

Disordered regions lie at residues 1–29 (MLKK…KTTP) and 124–156 (DSPI…GSPR). Composition is skewed to polar residues over residues 15–28 (ETNQ…SKTT) and 126–141 (PISS…NSQP). The FLZ-type zinc-finger motif lies at 221–265 (SFLSCCCNCKKSLGPRDDIFMYRGDRAFCSSECRSIEMMMSEEND).

It belongs to the FLZ family. As to quaternary structure, interacts with KIN10 and KIN11 via its FLZ-type zinc finger domain. Interacts with KINB1, KINB2, KINB3 and SNF4 via its N-terminal part. Interacts with HB21/ZHD3.

Functionally, may act as an adapter to facilitate the interaction of SnRK1 complex with effector proteins, conferring tissue- and stimulus-type specific differences in the SnRK1 regulation pathway. This chain is FCS-Like Zinc finger 8, found in Arabidopsis thaliana (Mouse-ear cress).